Here is a 528-residue protein sequence, read N- to C-terminus: ADP,ATP carrier protein 1 (528 aa).

12 consecutive transmembrane segments (helical) span residues 24 to 44, 63 to 83, 93 to 113, 124 to 144, 149 to 169, 184 to 204, 220 to 240, 284 to 304, 327 to 347, 356 to 376, 381 to 401, and 463 to 483; these read LKKV…YTIL, IPFI…LIYA, ALFF…PVVI, AFAD…IAML, FAVF…LMFW, FYAL…PAII, WGVS…IIAA, YMLL…LVEV, FSFW…GNVI, ALVT…LVIF, TGLV…VGAI, and IGAM…VWLT.

This sequence belongs to the ADP/ATP translocase tlc family.

Its subcellular location is the cell membrane. This chain is ADP,ATP carrier protein 1 (tlcA), found in Chlamydia trachomatis serovar D (strain ATCC VR-885 / DSM 19411 / UW-3/Cx).